Reading from the N-terminus, the 396-residue chain is Cystathionine beta-lyase (396 aa).

Position 211 is an N6-(pyridoxal phosphate)lysine (Lys-211).

The protein belongs to the trans-sulfuration enzymes family. Homotetramer. It depends on pyridoxal 5'-phosphate as a cofactor.

It localises to the cytoplasm. It carries out the reaction L,L-cystathionine + H2O = L-homocysteine + pyruvate + NH4(+). The catalysed reaction is an S-substituted L-cysteine + H2O = a thiol + pyruvate + NH4(+). Its pathway is amino-acid biosynthesis; L-methionine biosynthesis via de novo pathway; L-homocysteine from L-cystathionine: step 1/1. Catalyzes the cleavage of cystathionine to homocysteine, pyruvate and ammonia during methionine biosynthesis. The sequence is that of Cystathionine beta-lyase (metC) from Haemophilus influenzae (strain ATCC 51907 / DSM 11121 / KW20 / Rd).